We begin with the raw amino-acid sequence, 1088 residues long: Methionine S-methyltransferase (1088 aa).

This sequence belongs to the class I-like SAM-binding methyltransferase superfamily. As to quaternary structure, homotetramer. Expressed in the shoot, scutellum, and aleurone cells but not in the root or endosperm.

Its subcellular location is the cytoplasm. It catalyses the reaction L-methionine + S-adenosyl-L-methionine = S-methyl-L-methionine + S-adenosyl-L-homocysteine. Its function is as follows. Catalyzes the S-methylmethionine (SMM) biosynthesis from adenosyl-L-homocysteine (AdoMet) and methionine. SMM biosynthesis (by MMT1) and degradation (by HMT-1, HMT-2 and HMT-3) constitute the SMM cycle in plants, which is probably required to achieve short term control of AdoMet level. Also able to catalyze the selenium-methylmethionine (SeMM) from AdoMet and selenium-methionine (SeMet). May play a role in phoem sulfur transport; such function is however not essential. The protein is Methionine S-methyltransferase (MMT1) of Hordeum vulgare (Barley).